Reading from the N-terminus, the 308-residue chain is Ribosomal RNA large subunit methyltransferase F (308 aa).

This sequence belongs to the methyltransferase superfamily. METTL16/RlmF family.

It localises to the cytoplasm. It carries out the reaction adenosine(1618) in 23S rRNA + S-adenosyl-L-methionine = N(6)-methyladenosine(1618) in 23S rRNA + S-adenosyl-L-homocysteine + H(+). Its function is as follows. Specifically methylates the adenine in position 1618 of 23S rRNA. The sequence is that of Ribosomal RNA large subunit methyltransferase F from Shigella boydii serotype 18 (strain CDC 3083-94 / BS512).